Reading from the N-terminus, the 370-residue chain is Queuine tRNA-ribosyltransferase (370 aa).

The active-site Proton acceptor is the Asp93. Residues 93-97, Asp147, Gln189, and Gly216 contribute to the substrate site; that span reads DSGGF. Residues 247–253 are RNA binding; the sequence is GVGSPDC. Asp266 (nucleophile) is an active-site residue. An RNA binding; important for wobble base 34 recognition region spans residues 271-275; sequence TRIAR. Residues Cys304, Cys306, Cys309, and His335 each contribute to the Zn(2+) site.

Belongs to the queuine tRNA-ribosyltransferase family. As to quaternary structure, homodimer. Within each dimer, one monomer is responsible for RNA recognition and catalysis, while the other monomer binds to the replacement base PreQ1. Zn(2+) serves as cofactor.

The enzyme catalyses 7-aminomethyl-7-carbaguanine + guanosine(34) in tRNA = 7-aminomethyl-7-carbaguanosine(34) in tRNA + guanine. Its pathway is tRNA modification; tRNA-queuosine biosynthesis. Functionally, catalyzes the base-exchange of a guanine (G) residue with the queuine precursor 7-aminomethyl-7-deazaguanine (PreQ1) at position 34 (anticodon wobble position) in tRNAs with GU(N) anticodons (tRNA-Asp, -Asn, -His and -Tyr). Catalysis occurs through a double-displacement mechanism. The nucleophile active site attacks the C1' of nucleotide 34 to detach the guanine base from the RNA, forming a covalent enzyme-RNA intermediate. The proton acceptor active site deprotonates the incoming PreQ1, allowing a nucleophilic attack on the C1' of the ribose to form the product. After dissociation, two additional enzymatic reactions on the tRNA convert PreQ1 to queuine (Q), resulting in the hypermodified nucleoside queuosine (7-(((4,5-cis-dihydroxy-2-cyclopenten-1-yl)amino)methyl)-7-deazaguanosine). The chain is Queuine tRNA-ribosyltransferase from Pelotomaculum thermopropionicum (strain DSM 13744 / JCM 10971 / SI).